The chain runs to 20 residues: Maximin-Ht (20 aa).

Belongs to the bombinin family. Expressed by the skin glands.

The protein localises to the secreted. Functionally, has antimicrobial activity. The chain is Maximin-Ht from Bombina maxima (Giant fire-bellied toad).